A 90-amino-acid chain; its full sequence is MVLPKDVKWDLIRQFQRHEQDTGSPEVQIAILTERINRLTEHMKKHKKDIHSRRGLIAMVNKRRKLLEYLRETDYAKYLEVVQKLNLKVK.

This sequence belongs to the universal ribosomal protein uS15 family. Part of the 30S ribosomal subunit. Forms a bridge to the 50S subunit in the 70S ribosome, contacting the 23S rRNA.

Functionally, one of the primary rRNA binding proteins, it binds directly to 16S rRNA where it helps nucleate assembly of the platform of the 30S subunit by binding and bridging several RNA helices of the 16S rRNA. In terms of biological role, forms an intersubunit bridge (bridge B4) with the 23S rRNA of the 50S subunit in the ribosome. This Aquifex aeolicus (strain VF5) protein is Small ribosomal subunit protein uS15.